We begin with the raw amino-acid sequence, 648 residues long: Activatory protein CHA4 (648 aa).

A compositionally biased stretch (pro residues) spans 1–10 (MMLEPSPPPL). A disordered region spans residues 1 to 37 (MMLEPSPPPLTTTVTPSLPSSLKKSVTDNDQNNNNVP). Positions 11-22 (TTTVTPSLPSSL) are enriched in low complexity. The segment at residues 44 to 70 (CQNCRRRRRKCNMEKPCSNCIKFRTEC) is a DNA-binding region (zn(2)-C6 fungal-type). A disordered region spans residues 140–177 (AQSALPSSESNDENESDAFTKKMPSESPPPVGTNSIYP). Residues Ser164 and Ser166 each carry the phosphoserine modification.

It localises to the nucleus. Activates the CHA1 gene for L-serine dehydratase. Binds to the DNA sequence 5'-GVGGARAYRTRATTCCRC-3'. This is Activatory protein CHA4 (CHA4) from Saccharomyces cerevisiae (strain ATCC 204508 / S288c) (Baker's yeast).